The following is a 312-amino-acid chain: MLLRSRFLKVIHVRKQLSACSRFAIQTQTRCKSTDASEDEVKHFQELAPTWWDTDGSQRILHKMNLTRLDFVQRTVRNQVKIQNPEIFVPGFNYKEFLPEYVCDNIQREMQESIETNLDKRPEVSVLDVGCGGGILSESLARLKWVKNVQGIDLTRDCIMVAKEHAKKDPMLEGKINYECKALEDVTGQFDIITCMEMLEHVDMPSEILRHCWSRLNPEKGILFLSTINRDLISWFTTIFMGENVLKIVPKGTHHLSKYINSKEILAWFNDNYSGQFRLLDLKGTMYLPYQGWVEHDCSDVGNYFMAIQRLN.

A mitochondrion-targeting transit peptide spans 1-32 (MLLRSRFLKVIHVRKQLSACSRFAIQTQTRCK). R68, G130, D153, and M196 together coordinate S-adenosyl-L-methionine. Residues E197, E200, and H201 each contribute to the Mg(2+) site.

The protein belongs to the class I-like SAM-binding methyltransferase superfamily. UbiG/COQ3 family. As to quaternary structure, component of a multi-subunit COQ enzyme complex, composed of at least COQ3, COQ4, COQ5, COQ6, COQ7 and COQ9. Interacts directly with COQ4. The cofactor is Mg(2+).

It is found in the mitochondrion inner membrane. The catalysed reaction is 3,4-dihydroxy-5-(all-trans-hexaprenyl)benzoate + S-adenosyl-L-methionine = 4-hydroxy-3-methoxy-5-(all-trans-hexaprenyl)benzoate + S-adenosyl-L-homocysteine + H(+). The enzyme catalyses a 3-demethylubiquinone + S-adenosyl-L-methionine = a ubiquinone + S-adenosyl-L-homocysteine. It carries out the reaction 3-demethylubiquinol-6 + S-adenosyl-L-methionine = ubiquinol-6 + S-adenosyl-L-homocysteine + H(+). Its pathway is cofactor biosynthesis; ubiquinone biosynthesis. Its activity is regulated as follows. Regulated in response to catabolite repression. In terms of biological role, O-methyltransferase required for two non-consecutive steps during ubiquinone biosynthesis. Catalyzes the 2 O-methylation of 3,4-dihydroxy-5-(all-trans-hexaprenyl)benzoic acid into 4-hydroxy-3-methoxy-5-(all-trans-hexaprenyl)benzoic acid. Also catalyzes the last step of ubiquinone biosynthesis by mediating methylation of 3-demethylubiquinone into ubiquinone. Also able to mediate the methylation of 3-demethylubiquinol-6 into ubiquinol-6. The sequence is that of Ubiquinone biosynthesis O-methyltransferase, mitochondrial from Saccharomyces cerevisiae (strain ATCC 204508 / S288c) (Baker's yeast).